The following is a 222-amino-acid chain: UPF0488 protein C8orf33 homolog (222 aa).

The segment covering 1 to 16 (MAEPGRPAREAPAASS) has biased composition (low complexity). 3 disordered regions span residues 1–103 (MAEP…AEQL), 119–146 (KTQRPTPKQKEQAVGAIRTLRSEKTPLP), and 186–210 (VSEATRKKSGRVCRPRPAERAKTTP). Alanine 2 is subject to N-acetylalanine. The segment covering 17 to 28 (RKTHRAPRRPRP) has biased composition (basic residues). Arginine 27 is modified (omega-N-methylarginine). The span at 29-39 (SRSASGASEPP) shows a compositional bias: low complexity. Serine 75 bears the Phosphoserine mark. The span at 93 to 103 (PPSAEAQAEQL) shows a compositional bias: low complexity.

The protein belongs to the UPF0488 family.

This is UPF0488 protein C8orf33 homolog from Mus musculus (Mouse).